Consider the following 324-residue polypeptide: Carbamate kinase (324 aa).

This sequence belongs to the carbamate kinase family.

Its subcellular location is the cytoplasm. The catalysed reaction is hydrogencarbonate + NH4(+) + ATP = carbamoyl phosphate + ADP + H2O + H(+). The protein operates within amino-acid degradation; L-arginine degradation via ADI pathway. The polypeptide is Carbamate kinase (Rhizobium meliloti (strain 1021) (Ensifer meliloti)).